Consider the following 351-residue polypeptide: Protein Wnt-8b (351 aa).

The signal sequence occupies residues 1 to 22; sequence MFLSKPSVYICLFTCVLQLSHS. A disulfide bond links C54 and C65. A glycan (N-linked (GlcNAc...) asparagine) is linked at N103. 10 disulfide bridges follow: C104–C112, C114–C132, C180–C194, C182–C189, C256–C294, C272–C287, C291–C333, C309–C324, C311–C321, and C316–C317. S186 is lipidated: O-palmitoleoyl serine. Residue N259 is glycosylated (N-linked (GlcNAc...) asparagine).

The protein belongs to the Wnt family. In terms of processing, palmitoleoylation is required for efficient binding to frizzled receptors. Depalmitoleoylation leads to Wnt signaling pathway inhibition. Proteolytic processing by TIKI1 and TIKI2 promotes oxidation and formation of large disulfide-bond oligomers, leading to inactivation of WNT8B. In terms of tissue distribution, expression is restricted to the brain, and more specifically to the forebrain.

The protein localises to the secreted. The protein resides in the extracellular space. It localises to the extracellular matrix. Ligand for members of the frizzled family of seven transmembrane receptors. May play an important role in the development and differentiation of certain forebrain structures, notably the hippocampus. This Homo sapiens (Human) protein is Protein Wnt-8b (WNT8B).